A 43-amino-acid polypeptide reads, in one-letter code: uncharacterized protein (43 aa).

This is an uncharacterized protein from Schizosaccharomyces pombe (strain 972 / ATCC 24843) (Fission yeast).